Consider the following 535-residue polypeptide: CTP synthase (535 aa).

The tract at residues 1 to 267 (MTKYIFVTGG…DQIVCDHLKL (267 aa)) is amidoligase domain. Position 13 (Ser-13) interacts with CTP. Ser-13 serves as a coordination point for UTP. 14–19 (SLGKGI) lines the ATP pocket. Residue Tyr-54 coordinates L-glutamine. Asp-71 is an ATP binding site. 2 residues coordinate Mg(2+): Asp-71 and Glu-141. CTP is bound by residues 148 to 150 (DIE), 188 to 193 (KTKPTQ), and Lys-224. Residues 188-193 (KTKPTQ) and Lys-224 contribute to the UTP site. An ATP-binding site is contributed by 240–242 (RDA). Positions 292–534 (KIALVGKYVE…VRASITNKES (243 aa)) constitute a Glutamine amidotransferase type-1 domain. Position 354 (Gly-354) interacts with L-glutamine. Cys-381 acts as the Nucleophile; for glutamine hydrolysis in catalysis. L-glutamine-binding positions include 382-385 (LGMQ), Glu-405, and Arg-462. Catalysis depends on residues His-507 and Glu-509.

The protein belongs to the CTP synthase family. In terms of assembly, homotetramer.

The enzyme catalyses UTP + L-glutamine + ATP + H2O = CTP + L-glutamate + ADP + phosphate + 2 H(+). It carries out the reaction L-glutamine + H2O = L-glutamate + NH4(+). It catalyses the reaction UTP + NH4(+) + ATP = CTP + ADP + phosphate + 2 H(+). Its pathway is pyrimidine metabolism; CTP biosynthesis via de novo pathway; CTP from UDP: step 2/2. Its activity is regulated as follows. Allosterically activated by GTP, when glutamine is the substrate; GTP has no effect on the reaction when ammonia is the substrate. The allosteric effector GTP functions by stabilizing the protein conformation that binds the tetrahedral intermediate(s) formed during glutamine hydrolysis. Inhibited by the product CTP, via allosteric rather than competitive inhibition. Catalyzes the ATP-dependent amination of UTP to CTP with either L-glutamine or ammonia as the source of nitrogen. Regulates intracellular CTP levels through interactions with the four ribonucleotide triphosphates. The chain is CTP synthase from Bacillus cereus (strain ATCC 10987 / NRS 248).